The chain runs to 238 residues: Uridylate kinase (238 aa).

ATP is bound at residue 12-15 (KLSG). Residue glycine 54 coordinates UMP. Glycine 55 and arginine 59 together coordinate ATP. Residues aspartate 74 and 135–142 (TGNPYFTT) contribute to the UMP site. 4 residues coordinate ATP: threonine 162, asparagine 163, tyrosine 168, and aspartate 171.

This sequence belongs to the UMP kinase family. In terms of assembly, homohexamer.

Its subcellular location is the cytoplasm. It catalyses the reaction UMP + ATP = UDP + ADP. It participates in pyrimidine metabolism; CTP biosynthesis via de novo pathway; UDP from UMP (UMPK route): step 1/1. With respect to regulation, inhibited by UTP. Catalyzes the reversible phosphorylation of UMP to UDP. In Nitrobacter winogradskyi (strain ATCC 25391 / DSM 10237 / CIP 104748 / NCIMB 11846 / Nb-255), this protein is Uridylate kinase.